The sequence spans 240 residues: uncharacterized protein (240 aa).

Positions 1 to 17 are cleaved as a signal peptide; it reads MRMAFMLLALLFSFRNA.

This is an uncharacterized protein from Treponema pallidum (strain Nichols).